The following is a 151-amino-acid chain: Decarboxylase nsrE (151 aa).

The EthD domain maps to 31–126 (AGMTEEDYHN…VGDHENFADT (96 aa)).

This sequence belongs to the tpcK family.

The enzyme catalyses atrochrysone carboxylate + H(+) = atrochrysone + CO2. It functions in the pathway secondary metabolite biosynthesis. Decarboxylase; part of the gene cluster that mediates the biosynthesis of the tetrahydroxanthone dimer neosartorin, which exhibits antibacterial activity. The two different monomeric units appear to be synthesized by the same set of enzymes, among which the Baeyer-Villiger monooxygenase nsrF is the key enzyme for the divergence of the biosynthetic routes. The pathway begins with the synthesis of atrochrysone thioester by the polyketide synthase nsrB. The atrochrysone carboxyl ACP thioesterase nsrC then breaks the thioester bond and releases the atrochrysone carboxylic acid from AacuL. Atrochrysone carboxylic acid is decarboxylated by the decarboxylase nsrE, and oxidized by the anthrone oxygenase nsrD to yield emodin. Emodin is then reduced to emodin hydroquinone by the oxidoreductase nsrR. A-ring reduction by the short chain dehydrogenase nsrJ, dehydration by the scytalone dehydratase-like protein nsrI and probable spontaneous re-oxidation, results in overall deoxygenation to chrysophanol. The Baeyer-Villiger monooxygenase nsrF accepts chrysophanol as a substrate to insert one oxygen atom at two different positions to yield the precursors of both monomric units. NsrF is promiscuous/flexible in interacting with the 2 (non methylated and methylated) aromatic rings of chrysophanol, thus diverging the biosynthetic pathway at this point. After the hydrolysis of the lactones, methylesterification by the methyltransferase nsrG yields respectively moniliphenone and 2,2',6'-trihydroxy-4-methyl-6-methoxya-cyldiphenylmethanone. The next steps are the hydroxylation by the FAD-dependent monooxygenase nsrK, followed by isomerization by the monooxygenase nsrQ. The short chain dehydrogenase/reductase nsrO then catalyzes the C-5 ketoreduction to give the xanthone skeleton of blennolide C and 5-acetylblennolide A. The acetyltransferase nsrL has a strict substrate specificity and uses only blennolide A but not blennolide C to yield 5-acetylblennolide A as the single-acetylated product. In the final step of the biosynthesis, the heterodimerization of the 2 xanthones, blennolide C and 5-acetylblennolide A, is catalyzed by the cytochrome P450 monooxygenase nsrP. NsrP can utilize at least three different xanthones as its substrates to perform the dimerization reaction. This is Decarboxylase nsrE from Aspergillus novofumigatus (strain IBT 16806).